The chain runs to 692 residues: Elongation factor G (692 aa).

The tr-type G domain maps to 8 to 283 (DKYRNIGIMA…AVVDYMPSPL (276 aa)). Residues 17-24 (AHIDAGKT), 81-85 (DTPGH), and 135-138 (NKMD) each bind GTP.

The protein belongs to the TRAFAC class translation factor GTPase superfamily. Classic translation factor GTPase family. EF-G/EF-2 subfamily.

It localises to the cytoplasm. Functionally, catalyzes the GTP-dependent ribosomal translocation step during translation elongation. During this step, the ribosome changes from the pre-translocational (PRE) to the post-translocational (POST) state as the newly formed A-site-bound peptidyl-tRNA and P-site-bound deacylated tRNA move to the P and E sites, respectively. Catalyzes the coordinated movement of the two tRNA molecules, the mRNA and conformational changes in the ribosome. In Trichlorobacter lovleyi (strain ATCC BAA-1151 / DSM 17278 / SZ) (Geobacter lovleyi), this protein is Elongation factor G.